The primary structure comprises 309 residues: Olfactory receptor 8B4 (309 aa).

The Extracellular segment spans residues 1–25; that stretch reads MTLRNSSSVTEFILVGLSEQPELQL. An N-linked (GlcNAc...) asparagine glycan is attached at asparagine 5. A helical membrane pass occupies residues 26–46; it reads PLFLLFLGIYVFTVVGNLGLI. The Cytoplasmic portion of the chain corresponds to 47-54; sequence TLIGINPS. A helical membrane pass occupies residues 55–75; that stretch reads LHTPMYFFLFNLSFIDLCYSC. Over 76-98 the chain is Extracellular; sequence VFTPKMLNDFVSESIISYVGCMT. Cysteine 96 and cysteine 188 are joined by a disulfide. The chain crosses the membrane as a helical span at residues 99-119; the sequence is QLFFFCFFVNSECYVLVSMAY. Topologically, residues 120–138 are cytoplasmic; sequence DRYVAICNPLLYMVTMSPR. A helical membrane pass occupies residues 139–159; that stretch reads VCFLLMFGSYVVGFAGAMAHT. At 160–196 the chain is on the extracellular side; the sequence is GSMLRLTFCDSNVIDHYLCDVLPLLQLSCTSTHVSEL. The chain crosses the membrane as a helical span at residues 197-216; it reads VFFIVVGVITMLSSISIVIS. Residues 217-236 are Cytoplasmic-facing; sequence YALILSNILCIPSAEGRSKA. Residues 237–257 traverse the membrane as a helical segment; the sequence is FSTWGSHIIAVALFFGSGTFT. Topologically, residues 258-270 are extracellular; that stretch reads YLTTSFPGSMNHG. Residues 271–291 form a helical membrane-spanning segment; that stretch reads RFASVFYTNVVPMLNPSIYSL. Residues 292–309 are Cytoplasmic-facing; that stretch reads RNKDDKLALGKTLKRVLF.

Belongs to the G-protein coupled receptor 1 family.

Its subcellular location is the cell membrane. In terms of biological role, odorant receptor. The protein is Olfactory receptor 8B4 (OR8B4) of Homo sapiens (Human).